The sequence spans 2568 residues: Highly reducing polyketide synthase AN6791 (2568 aa).

Positions 11 to 445 (AEPIAIVGLS…GTNAHLIVES (435 aa)) constitute a Ketosynthase family 3 (KS3) domain. Residues Cys-200, His-326, and His-366 each act as for beta-ketoacyl synthase activity in the active site. The 325-residue stretch at 558–882 (VFTGQGAQWY…GSLVREVSAV (325 aa)) folds into the Malonyl-CoA:ACP transacylase (MAT) domain. Residues 949–1087 (HDLLGSLVLG…GLITMEPEDA (139 aa)) are N-terminal hotdog fold. The PKS/mFAS DH domain maps to 949 to 1258 (HDLLGSLVLG…FQSVGRSAAP (310 aa)). His-981 acts as the Proton acceptor; for dehydratase activity in catalysis. The tract at residues 1104-1258 (TRRFGPSDLY…FQSVGRSAAP (155 aa)) is C-terminal hotdog fold. Asp-1169 serves as the catalytic Proton donor; for dehydratase activity. A methyltransferase (CMet) domain region spans residues 1311–1620 (RACLYFIYDA…EVRDCESDEW (310 aa)). Residues 1857–2174 (GLLDTIAFDD…VGKHSGKVVL (318 aa)) form the Enoyl reductase (ER) domain. A Ketoreductase (KR) domain is found at 2197–2375 (ASYLLVGGAG…AVSMDLGPVK (179 aa)). Residues 2481 to 2558 (QAEKLVVEAI…ALASEVTRKS (78 aa)) enclose the Carrier domain. Residue Ser-2518 is modified to O-(pantetheine 4'-phosphoryl)serine.

Requires pantetheine 4'-phosphate as cofactor.

Its pathway is secondary metabolite biosynthesis. Its function is as follows. Highly reducing polyketide synthase; part of a cluster that mediates the biosynthesis of a yet undetermined secondary metabolite. With esterase AN6793, produces a pathway intermediate compound with molecular weight 258. In Emericella nidulans (strain FGSC A4 / ATCC 38163 / CBS 112.46 / NRRL 194 / M139) (Aspergillus nidulans), this protein is Highly reducing polyketide synthase AN6791.